We begin with the raw amino-acid sequence, 188 residues long: MKISANSIRTGNILVYNNDLWVVSKTPEHTQPGKGGAYVQVEMKNLKTGTKRNERFSSANYLEKAELEQKDYQFLYFEGDDLVLMDTKHFDQINISKEMLEEKLSFLTENMIVKVEFYNDKPLNIELPPTVILEISETDPVIKGATATASYKSAILENGIKVKVPQYLEIGEKIVVKTDDMTYVERAK.

It belongs to the elongation factor P family.

The protein localises to the cytoplasm. Its pathway is protein biosynthesis; polypeptide chain elongation. Its function is as follows. Involved in peptide bond synthesis. Stimulates efficient translation and peptide-bond synthesis on native or reconstituted 70S ribosomes in vitro. Probably functions indirectly by altering the affinity of the ribosome for aminoacyl-tRNA, thus increasing their reactivity as acceptors for peptidyl transferase. In Rickettsia conorii (strain ATCC VR-613 / Malish 7), this protein is Elongation factor P (efp).